The chain runs to 272 residues: Imidazole glycerol phosphate synthase subunit HisF (272 aa).

Active-site residues include Asp-11 and Asp-130.

The protein belongs to the HisA/HisF family. Heterodimer of HisH and HisF.

Its subcellular location is the cytoplasm. It catalyses the reaction 5-[(5-phospho-1-deoxy-D-ribulos-1-ylimino)methylamino]-1-(5-phospho-beta-D-ribosyl)imidazole-4-carboxamide + L-glutamine = D-erythro-1-(imidazol-4-yl)glycerol 3-phosphate + 5-amino-1-(5-phospho-beta-D-ribosyl)imidazole-4-carboxamide + L-glutamate + H(+). It participates in amino-acid biosynthesis; L-histidine biosynthesis; L-histidine from 5-phospho-alpha-D-ribose 1-diphosphate: step 5/9. IGPS catalyzes the conversion of PRFAR and glutamine to IGP, AICAR and glutamate. The HisF subunit catalyzes the cyclization activity that produces IGP and AICAR from PRFAR using the ammonia provided by the HisH subunit. This chain is Imidazole glycerol phosphate synthase subunit HisF, found in Methanococcus maripaludis (strain C6 / ATCC BAA-1332).